Consider the following 295-residue polypeptide: Protoheme IX farnesyltransferase (295 aa).

Helical transmembrane passes span 8-28 (VTKPGIIFGNLISVIGGFLLA), 35-55 (YPLFVWTLLGVSLVVASGCVF), 84-104 (ASLVYATLLGIAGFMLLWFGA), 107-127 (LACWLGVMGFVVYVGVYSLYM), 132-152 (VYGTLIGSLSGAAPPVIGYCA), 162-182 (AILLAIFSLWQMPHSYAIAIF), 208-228 (ITLYIVAFAVATLMLSLGGYA), 233-253 (LVVAAAVSVWWLGMALRGYKV), and 264-284 (FVFSIVAITALSVMMSVDFMV).

The protein belongs to the UbiA prenyltransferase family. Protoheme IX farnesyltransferase subfamily.

It localises to the cell inner membrane. It catalyses the reaction heme b + (2E,6E)-farnesyl diphosphate + H2O = Fe(II)-heme o + diphosphate. It participates in porphyrin-containing compound metabolism; heme O biosynthesis; heme O from protoheme: step 1/1. Its function is as follows. Converts heme B (protoheme IX) to heme O by substitution of the vinyl group on carbon 2 of heme B porphyrin ring with a hydroxyethyl farnesyl side group. This chain is Protoheme IX farnesyltransferase, found in Klebsiella pneumoniae subsp. pneumoniae (strain ATCC 700721 / MGH 78578).